The primary structure comprises 175 residues: ATP synthase subunit delta (175 aa).

The protein belongs to the ATPase delta chain family. F-type ATPases have 2 components, F(1) - the catalytic core - and F(0) - the membrane proton channel. F(1) has five subunits: alpha(3), beta(3), gamma(1), delta(1), epsilon(1). F(0) has three main subunits: a(1), b(2) and c(10-14). The alpha and beta chains form an alternating ring which encloses part of the gamma chain. F(1) is attached to F(0) by a central stalk formed by the gamma and epsilon chains, while a peripheral stalk is formed by the delta and b chains.

It localises to the cell inner membrane. Its function is as follows. F(1)F(0) ATP synthase produces ATP from ADP in the presence of a proton or sodium gradient. F-type ATPases consist of two structural domains, F(1) containing the extramembraneous catalytic core and F(0) containing the membrane proton channel, linked together by a central stalk and a peripheral stalk. During catalysis, ATP synthesis in the catalytic domain of F(1) is coupled via a rotary mechanism of the central stalk subunits to proton translocation. In terms of biological role, this protein is part of the stalk that links CF(0) to CF(1). It either transmits conformational changes from CF(0) to CF(1) or is implicated in proton conduction. This chain is ATP synthase subunit delta, found in Xanthomonas oryzae pv. oryzae (strain MAFF 311018).